A 251-amino-acid polypeptide reads, in one-letter code: CDP-diacylglycerol pyrophosphatase (251 aa).

A helical membrane pass occupies residues 5-25 (GYFLLAVIVIVAAAGVGYWKF).

It belongs to the Cdh family.

The protein localises to the cell inner membrane. It catalyses the reaction a CDP-1,2-diacyl-sn-glycerol + H2O = a 1,2-diacyl-sn-glycero-3-phosphate + CMP + 2 H(+). Its pathway is phospholipid metabolism; CDP-diacylglycerol degradation; phosphatidate from CDP-diacylglycerol: step 1/1. The polypeptide is CDP-diacylglycerol pyrophosphatase (Salmonella paratyphi A (strain ATCC 9150 / SARB42)).